The following is a 264-amino-acid chain: 3-dehydroquinate dehydratase (264 aa).

3-dehydroquinate contacts are provided by residues 50 to 52 and Arg-86; that span reads EWR. The Proton donor/acceptor role is filled by His-148. Lys-175 serves as the catalytic Schiff-base intermediate with substrate. Positions 217, 236, and 240 each coordinate 3-dehydroquinate.

This sequence belongs to the type-I 3-dehydroquinase family. In terms of assembly, homodimer.

It carries out the reaction 3-dehydroquinate = 3-dehydroshikimate + H2O. It participates in metabolic intermediate biosynthesis; chorismate biosynthesis; chorismate from D-erythrose 4-phosphate and phosphoenolpyruvate: step 3/7. In terms of biological role, involved in the third step of the chorismate pathway, which leads to the biosynthesis of aromatic amino acids. Catalyzes the cis-dehydration of 3-dehydroquinate (DHQ) and introduces the first double bond of the aromatic ring to yield 3-dehydroshikimate. This chain is 3-dehydroquinate dehydratase, found in Albidiferax ferrireducens (strain ATCC BAA-621 / DSM 15236 / T118) (Rhodoferax ferrireducens).